Reading from the N-terminus, the 426-residue chain is Glutamate-1-semialdehyde 2,1-aminomutase (426 aa).

The residue at position 267 (Lys-267) is an N6-(pyridoxal phosphate)lysine.

The protein belongs to the class-III pyridoxal-phosphate-dependent aminotransferase family. HemL subfamily. Homodimer. It depends on pyridoxal 5'-phosphate as a cofactor.

It is found in the cytoplasm. The catalysed reaction is (S)-4-amino-5-oxopentanoate = 5-aminolevulinate. The protein operates within porphyrin-containing compound metabolism; protoporphyrin-IX biosynthesis; 5-aminolevulinate from L-glutamyl-tRNA(Glu): step 2/2. This is Glutamate-1-semialdehyde 2,1-aminomutase from Bdellovibrio bacteriovorus (strain ATCC 15356 / DSM 50701 / NCIMB 9529 / HD100).